Reading from the N-terminus, the 100-residue chain is Cytochrome bo(3) ubiquinol oxidase subunit 4 (100 aa).

Topologically, residues 1–9 (MLKNRYLKY) are cytoplasmic. A helical transmembrane segment spans residues 10–32 (LFILILLSILSIMPIFAIIYRIF). Residues 33–36 (SRNY) lie on the Extracellular side of the membrane. A helical membrane pass occupies residues 37-59 (LYAFIIVCLFFQILAHIKFFLNL). Topologically, residues 60-68 (DFSLEQRWK) are cytoplasmic. A helical transmembrane segment spans residues 69-90 (LISVIFSLVVGLIILLGSIWVI). The Extracellular segment spans residues 91–100 (KNLNNNLCIM).

This sequence belongs to the cytochrome c oxidase bacterial subunit 4 family. In terms of assembly, heterooctamer of two A chains, two B chains, two C chains and two D chains.

Its subcellular location is the cell membrane. In terms of biological role, cytochrome bo(3) ubiquinol terminal oxidase is the component of the aerobic respiratory chain of E.coli that predominates when cells are grown at high aeration. Has proton pump activity across the membrane in addition to electron transfer, pumping 2 protons/electron. This Buchnera aphidicola subsp. Baizongia pistaciae (strain Bp) protein is Cytochrome bo(3) ubiquinol oxidase subunit 4 (cyoD).